A 530-amino-acid chain; its full sequence is Copine-B (530 aa).

C2 domains are found at residues 1–125 (MTTP…SEIK) and 130–253 (ETGV…PLIN). Ca(2+) is bound by residues aspartate 25, aspartate 31, aspartate 85, aspartate 87, and aspartate 100. One can recognise a VWFA domain in the interval 294 to 513 (NLMVAIDCTA…ETLREIPQQL (220 aa)).

This sequence belongs to the copine family. The cofactor is Ca(2+).

The protein is Copine-B (cpnB-1) of Dictyostelium discoideum (Social amoeba).